The chain runs to 310 residues: Glutamyl-Q tRNA(Asp) synthetase (310 aa).

Residues 24–28 and glutamate 60 each bind L-glutamate; that span reads RFAPS. A 'HIGH' region motif is present at residues 27 to 37; the sequence is PSPSGPLHFGS. The Zn(2+) site is built by cysteine 116, cysteine 118, tyrosine 130, and cysteine 134. The L-glutamate site is built by tyrosine 187 and arginine 205. Residues 243–247 carry the 'KMSKS' region motif; the sequence is KLSKQ. Residue lysine 246 participates in ATP binding.

The protein belongs to the class-I aminoacyl-tRNA synthetase family. GluQ subfamily. Requires Zn(2+) as cofactor.

Catalyzes the tRNA-independent activation of glutamate in presence of ATP and the subsequent transfer of glutamate onto a tRNA(Asp). Glutamate is transferred on the 2-amino-5-(4,5-dihydroxy-2-cyclopenten-1-yl) moiety of the queuosine in the wobble position of the QUC anticodon. This Photobacterium profundum (strain SS9) protein is Glutamyl-Q tRNA(Asp) synthetase.